Consider the following 415-residue polypeptide: Methylthioribose-1-phosphate isomerase (415 aa).

The active-site Proton donor is the D284.

It belongs to the eIF-2B alpha/beta/delta subunits family. MtnA subfamily.

Its subcellular location is the cytoplasm. The protein resides in the nucleus. It catalyses the reaction 5-(methylsulfanyl)-alpha-D-ribose 1-phosphate = 5-(methylsulfanyl)-D-ribulose 1-phosphate. Its pathway is amino-acid biosynthesis; L-methionine biosynthesis via salvage pathway; L-methionine from S-methyl-5-thio-alpha-D-ribose 1-phosphate: step 1/6. In terms of biological role, catalyzes the interconversion of methylthioribose-1-phosphate (MTR-1-P) into methylthioribulose-1-phosphate (MTRu-1-P). This Vanderwaltozyma polyspora (strain ATCC 22028 / DSM 70294 / BCRC 21397 / CBS 2163 / NBRC 10782 / NRRL Y-8283 / UCD 57-17) (Kluyveromyces polysporus) protein is Methylthioribose-1-phosphate isomerase.